We begin with the raw amino-acid sequence, 407 residues long: Histidine--tRNA ligase (407 aa).

It belongs to the class-II aminoacyl-tRNA synthetase family. Homodimer.

It is found in the cytoplasm. It catalyses the reaction tRNA(His) + L-histidine + ATP = L-histidyl-tRNA(His) + AMP + diphosphate + H(+). In Wolbachia pipientis subsp. Culex pipiens (strain wPip), this protein is Histidine--tRNA ligase.